The chain runs to 437 residues: tRNA-2-methylthio-N(6)-dimethylallyladenosine synthase (437 aa).

An MTTase N-terminal domain is found at 1 to 115 (MKVYIETMGC…ISQVIHKEKA (115 aa)). [4Fe-4S] cluster is bound by residues C10, C46, C78, C148, C152, and C155. Residues 134 to 367 (KKAQIRSLLN…QNRHKEILEE (234 aa)) form the Radical SAM core domain. The TRAM domain occupies 370-436 (KLEVGKTHVV…KGRLIAAIKG (67 aa)).

It belongs to the methylthiotransferase family. MiaB subfamily. As to quaternary structure, monomer. The cofactor is [4Fe-4S] cluster.

Its subcellular location is the cytoplasm. It carries out the reaction N(6)-dimethylallyladenosine(37) in tRNA + (sulfur carrier)-SH + AH2 + 2 S-adenosyl-L-methionine = 2-methylsulfanyl-N(6)-dimethylallyladenosine(37) in tRNA + (sulfur carrier)-H + 5'-deoxyadenosine + L-methionine + A + S-adenosyl-L-homocysteine + 2 H(+). Its function is as follows. Catalyzes the methylthiolation of N6-(dimethylallyl)adenosine (i(6)A), leading to the formation of 2-methylthio-N6-(dimethylallyl)adenosine (ms(2)i(6)A) at position 37 in tRNAs that read codons beginning with uridine. The polypeptide is tRNA-2-methylthio-N(6)-dimethylallyladenosine synthase (Helicobacter pylori (strain HPAG1)).